A 433-amino-acid chain; its full sequence is Histidinol dehydrogenase 2 (433 aa).

The NAD(+) site is built by tyrosine 130, glutamine 192, and asparagine 215. Serine 238, glutamine 260, and histidine 263 together coordinate substrate. The Zn(2+) site is built by glutamine 260 and histidine 263. Active-site proton acceptor residues include glutamate 328 and histidine 329. Substrate-binding residues include histidine 329, aspartate 362, glutamate 416, and histidine 421. Aspartate 362 serves as a coordination point for Zn(2+). Histidine 421 is a binding site for Zn(2+).

It belongs to the histidinol dehydrogenase family. Zn(2+) is required as a cofactor.

The catalysed reaction is L-histidinol + 2 NAD(+) + H2O = L-histidine + 2 NADH + 3 H(+). The protein operates within amino-acid biosynthesis; L-histidine biosynthesis; L-histidine from 5-phospho-alpha-D-ribose 1-diphosphate: step 9/9. Its function is as follows. Catalyzes the sequential NAD-dependent oxidations of L-histidinol to L-histidinaldehyde and then to L-histidine. In Trichormus variabilis (strain ATCC 29413 / PCC 7937) (Anabaena variabilis), this protein is Histidinol dehydrogenase 2.